The sequence spans 144 residues: Probable low molecular weight protein-tyrosine-phosphatase AmsI (144 aa).

The Nucleophile role is filled by Cys9. Residue Arg15 is part of the active site. Asp115 functions as the Proton donor in the catalytic mechanism.

Belongs to the low molecular weight phosphotyrosine protein phosphatase family.

The enzyme catalyses O-phospho-L-tyrosyl-[protein] + H2O = L-tyrosyl-[protein] + phosphate. Its function is as follows. May function as a phosphatase required for amylovoran (an exopolysaccharide that functions as a virulence factor) production. The polypeptide is Probable low molecular weight protein-tyrosine-phosphatase AmsI (amsI) (Erwinia amylovora (Fire blight bacteria)).